The primary structure comprises 339 residues: DNA-directed RNA polymerase subunit alpha (339 aa).

An alpha N-terminal domain (alpha-NTD) region spans residues 1 to 237 (MENELMYMNW…EQMNVFINFD (237 aa)). The tract at residues 256-339 (FNENLYRSVN…PPAEDNKEGE (84 aa)) is alpha C-terminal domain (alpha-CTD).

It belongs to the RNA polymerase alpha chain family. Homodimer. The RNAP catalytic core consists of 2 alpha, 1 beta, 1 beta' and 1 omega subunit. When a sigma factor is associated with the core the holoenzyme is formed, which can initiate transcription.

The catalysed reaction is RNA(n) + a ribonucleoside 5'-triphosphate = RNA(n+1) + diphosphate. In terms of biological role, DNA-dependent RNA polymerase catalyzes the transcription of DNA into RNA using the four ribonucleoside triphosphates as substrates. This chain is DNA-directed RNA polymerase subunit alpha, found in Desulfosudis oleivorans (strain DSM 6200 / JCM 39069 / Hxd3) (Desulfococcus oleovorans).